Here is a 218-residue protein sequence, read N- to C-terminus: Ribose-5-phosphate isomerase A (218 aa).

Substrate contacts are provided by residues T28–T31, D81–D84, and K94–G97. E103 (proton acceptor) is an active-site residue. K121 provides a ligand contact to substrate.

The protein belongs to the ribose 5-phosphate isomerase family. As to quaternary structure, homodimer.

The enzyme catalyses aldehydo-D-ribose 5-phosphate = D-ribulose 5-phosphate. The protein operates within carbohydrate degradation; pentose phosphate pathway; D-ribose 5-phosphate from D-ribulose 5-phosphate (non-oxidative stage): step 1/1. Catalyzes the reversible conversion of ribose-5-phosphate to ribulose 5-phosphate. The polypeptide is Ribose-5-phosphate isomerase A (Aliivibrio salmonicida (strain LFI1238) (Vibrio salmonicida (strain LFI1238))).